Consider the following 328-residue polypeptide: Putative GDP-L-fucose synthase 2 (328 aa).

Ala-2 carries the post-translational modification N-acetylalanine. 26–32 is a binding site for NADP(+); that stretch reads GHRGLVG. The active-site Proton donor/acceptor is the Tyr-152. NADP(+) is bound by residues Lys-156, 179 to 182, and His-195; that span reads PTNL. Positions 203, 218, 225, and 285 each coordinate substrate.

Belongs to the NAD(P)-dependent epimerase/dehydratase family. Fucose synthase subfamily. Homodimer.

The enzyme catalyses GDP-beta-L-fucose + NADP(+) = GDP-4-dehydro-alpha-D-rhamnose + NADPH + H(+). Its pathway is nucleotide-sugar biosynthesis; GDP-L-fucose biosynthesis via de novo pathway; GDP-L-fucose from GDP-alpha-D-mannose: step 2/2. Catalyzes the two-step NADP-dependent conversion of GDP-4-dehydro-6-deoxy-D-mannose to GDP-fucose, involving an epimerase and a reductase reaction. In Arabidopsis thaliana (Mouse-ear cress), this protein is Putative GDP-L-fucose synthase 2 (GER2).